A 150-amino-acid polypeptide reads, in one-letter code: Protein Turandot X (150 aa).

An N-terminal signal peptide occupies residues Met-1 to Ala-22. The interval Arg-127–Lys-150 is disordered. A compositionally biased stretch (polar residues) spans Ser-132–Lys-150.

It belongs to the Turandot family.

Its subcellular location is the secreted. Functionally, a humoral factor that may play a role in stress tolerance. The polypeptide is Protein Turandot X (Drosophila simulans (Fruit fly)).